The chain runs to 361 residues: DNA replication and repair protein RecF (361 aa).

Position 30–37 (30–37) interacts with ATP; it reads GPNGSGKT.

The protein belongs to the RecF family.

It is found in the cytoplasm. Functionally, the RecF protein is involved in DNA metabolism; it is required for DNA replication and normal SOS inducibility. RecF binds preferentially to single-stranded, linear DNA. It also seems to bind ATP. The protein is DNA replication and repair protein RecF of Erwinia tasmaniensis (strain DSM 17950 / CFBP 7177 / CIP 109463 / NCPPB 4357 / Et1/99).